The primary structure comprises 721 residues: Penicillin-binding protein activator LpoA (721 aa).

An N-terminal signal peptide occupies residues 1–26 (MVPLTFLRTKASRSLPIMLAALIFAG). Cysteine 27 carries the N-palmitoyl cysteine lipid modification. Residue cysteine 27 is the site of S-diacylglycerol cysteine attachment. Polar residues predominate over residues 316-330 (TSDLTSAQAPAQGTM). The interval 316–393 (TSDLTSAQAP…PAAQPQAVAA (78 aa)) is disordered. The segment covering 331-393 (QNPVTAPTTP…PAAQPQAVAA (63 aa)) has biased composition (low complexity).

It belongs to the LpoA family. Interacts with PBP1a.

The protein resides in the cell outer membrane. In terms of biological role, regulator of peptidoglycan synthesis that is essential for the function of penicillin-binding protein 1A (PBP1a). The chain is Penicillin-binding protein activator LpoA from Enterobacter sp. (strain 638).